The sequence spans 386 residues: Lipid-A-disaccharide synthase (386 aa).

This sequence belongs to the LpxB family.

The enzyme catalyses a lipid X + a UDP-2-N,3-O-bis[(3R)-3-hydroxyacyl]-alpha-D-glucosamine = a lipid A disaccharide + UDP + H(+). It functions in the pathway bacterial outer membrane biogenesis; LPS lipid A biosynthesis. Functionally, condensation of UDP-2,3-diacylglucosamine and 2,3-diacylglucosamine-1-phosphate to form lipid A disaccharide, a precursor of lipid A, a phosphorylated glycolipid that anchors the lipopolysaccharide to the outer membrane of the cell. This chain is Lipid-A-disaccharide synthase, found in Chromohalobacter salexigens (strain ATCC BAA-138 / DSM 3043 / CIP 106854 / NCIMB 13768 / 1H11).